The following is a 118-amino-acid chain: Ribonuclease P protein component (118 aa).

Belongs to the RnpA family. In terms of assembly, consists of a catalytic RNA component (M1 or rnpB) and a protein subunit.

It catalyses the reaction Endonucleolytic cleavage of RNA, removing 5'-extranucleotides from tRNA precursor.. RNaseP catalyzes the removal of the 5'-leader sequence from pre-tRNA to produce the mature 5'-terminus. It can also cleave other RNA substrates such as 4.5S RNA. The protein component plays an auxiliary but essential role in vivo by binding to the 5'-leader sequence and broadening the substrate specificity of the ribozyme. This Desulfatibacillum aliphaticivorans protein is Ribonuclease P protein component.